We begin with the raw amino-acid sequence, 623 residues long: EIN3-binding F-box protein 2 (623 aa).

Positions 52–106 constitute an F-box domain; sequence QTSIDVLPEECLFEILRRLPSGQERSACACVSKHWLNLLSSISRSEVNESSVQDV. LRR repeat units lie at residues 119 to 147, 151 to 176, 177 to 202, 203 to 228, 229 to 254, 255 to 281, 307 to 334, 335 to 360, 361 to 386, 387 to 413, 414 to 441, 442 to 467, 468 to 494, 495 to 521, 522 to 547, 548 to 574, 575 to 600, and 601 to 623; these read GKKATDLRLAAIAVGTSSRGGLGKLQIRG, ESKVTDVGLGAVAHGCPSLRIVSLWN, LPAVSDLGLSEIARSCPMIEKLDLSR, CPGITDSGLVAIAENCVNLSDLTIDS, CSGVGNEGLRAIARRCVNLRSISIRS, CPRIGDQGVAFLLAQAGSYLTKVKLQM, LQGVNEKGFWVMGNAKGLKKLKSLSVMS, CRGMTDVGLEAVGNGCPDLKHVSLNK, CLLVSGKGLVALAKSALSLESLKLEE, CHRINQFGLMGFLMNCGSKLKAFSLAN, CLGISDFNSESSLPSPSCSSLRSLSIRC, CPGFGDASLAFLGKFCHQLQDVELCG, LNGVTDAGVRELLQSNNVGLVKVNLSE, CINVSDNTVSAISVCHGRTLESLNLDG, CKNITNASLVAVAKNCYSVNDLDISN, TLVSDHGIKALASSPNHLNLQVLSIGG, CSSITDKSKACIQKLGRTLLGLNIQR, and CGRISSSTVDTLLENLWRCDILY.

As to quaternary structure, part of a SCF (SKP1-cullin-F-box) protein ligase complex. Interacts with CUL1, SKP1A/ASK1, SKP1B/ASK2, EIN3, and EIL1. As to expression, ubiquitous.

It localises to the nucleus. It participates in protein modification; protein ubiquitination. Functionally, component of SCF(EBF1) E3 ubiquitin ligase complexes, which may mediate the ubiquitination and subsequent proteasomal degradation of target proteins (probably including EIN3 and EIL1). Regulator of the ethylene signaling cascade by modulating the stability of EIN3 and EIL1 proteins. The chain is EIN3-binding F-box protein 2 (EBF2) from Arabidopsis thaliana (Mouse-ear cress).